We begin with the raw amino-acid sequence, 113 residues long: Cell cycle protein GpsB (113 aa).

The stretch at L36 to P68 forms a coiled coil.

The protein belongs to the GpsB family. As to quaternary structure, forms polymers through the coiled coil domains. Interacts with PBP1, MreC and EzrA.

It localises to the cytoplasm. Divisome component that associates with the complex late in its assembly, after the Z-ring is formed, and is dependent on DivIC and PBP2B for its recruitment to the divisome. Together with EzrA, is a key component of the system that regulates PBP1 localization during cell cycle progression. Its main role could be the removal of PBP1 from the cell pole after pole maturation is completed. Also contributes to the recruitment of PBP1 to the division complex. Not essential for septum formation. This Listeria innocua serovar 6a (strain ATCC BAA-680 / CLIP 11262) protein is Cell cycle protein GpsB.